The chain runs to 307 residues: MGSTMEPPGGGYLHLGAVTSPVGTARVLQLVFGCTTFSLVAHRGGFSGVQGTFCVAAWGFCFALSVLVVACEFTRLHGCLRLSWGNFTAAFAMLATLLSATAAVIYPLYFTRLECPPEPEGCTARNFRLAASVFAGLLFLAYATEVALTRARPGQVASYMATVSGLLKIVQAFVACIIFGALVHDSRYGRYVATQWCVAVYSLCFLATVVVVILSVLGHTGGLGCPFDRMVVVYTFLAVLLYLSAAVIWPVFCFDPKYGEPGRPPDCPRGSCPWDSQLVVATFTYVNLLLYVADLAYSQRIRFVPTF.

MARVEL domains follow at residues 17–154 and 159–303; these read AVTS…ARPG and YMAT…RIRF. 7 helical membrane-spanning segments follow: residues 53–73, 90–110, 129–149, 163–183, 198–218, 232–252, and 278–298; these read FCVA…ACEF, AFAM…PLYF, LAAS…VALT, VSGL…GALV, VAVY…SVLG, VVYT…WPVF, and LVVA…LAYS.

Belongs to the MAL family.

The protein localises to the membrane. The polypeptide is Myeloid-associated differentiation marker-like protein 2 (MYADML2) (Bos taurus (Bovine)).